Here is a 340-residue protein sequence, read N- to C-terminus: CMP-sialic acid transporter 1 (340 aa).

At Met-1–Pro-5 the chain is on the cytoplasmic side. Residues Trp-6–Leu-26 traverse the membrane as a helical segment. Residues Ser-27–Asp-36 lie on the Lumenal side of the membrane. Residues Tyr-37 to Trp-57 form a helical membrane-spanning segment. Residues Arg-58–Arg-78 are Cytoplasmic-facing. Residues Leu-79–Thr-99 traverse the membrane as a helical segment. At Tyr-100–Asp-102 the chain is on the lumenal side. Residues Thr-103–Leu-125 traverse the membrane as a helical segment. At Lys-126 to Tyr-168 the chain is on the cytoplasmic side. A helical transmembrane segment spans residues Leu-169–Met-189. Residues Lys-190–Asn-200 lie on the Lumenal side of the membrane. Residues Leu-201–Ala-217 form a helical membrane-spanning segment. Residues Asp-218–Ser-238 are Cytoplasmic-facing. A helical transmembrane segment spans residues Ile-239–Met-259. At Lys-260–Ser-282 the chain is on the lumenal side. A helical transmembrane segment spans residues Ile-283–Met-303. Topologically, residues Ser-304–Ser-340 are cytoplasmic.

This sequence belongs to the nucleotide-sugar transporter family. CMP-Sialate:CMP antiporter (TC 2.A.7.12) subfamily.

Its subcellular location is the golgi apparatus membrane. Its function is as follows. Essential protein. Sugar transporter involved in the transport of CMP-sialic acid from the cytoplasm into the Golgi. This chain is CMP-sialic acid transporter 1, found in Arabidopsis thaliana (Mouse-ear cress).